We begin with the raw amino-acid sequence, 397 residues long: Elongation factor Tu (397 aa).

One can recognise a tr-type G domain in the interval 10–207; the sequence is KPHVNVGTIG…ACDSYIPDPQ (198 aa). A G1 region spans residues 19–26; that stretch reads GHIDHGKT. Position 19–26 (19–26) interacts with GTP; sequence GHIDHGKT. Thr-26 serves as a coordination point for Mg(2+). The G2 stretch occupies residues 60–64; the sequence is GITIA. Residues 81-84 form a G3 region; that stretch reads DCPG. GTP is bound by residues 81–85 and 136–139; these read DCPGH and NKCD. Residues 136 to 139 are G4; the sequence is NKCD. Residues 174 to 176 are G5; it reads SAL.

This sequence belongs to the TRAFAC class translation factor GTPase superfamily. Classic translation factor GTPase family. EF-Tu/EF-1A subfamily. In terms of assembly, monomer.

It localises to the cytoplasm. The catalysed reaction is GTP + H2O = GDP + phosphate + H(+). GTP hydrolase that promotes the GTP-dependent binding of aminoacyl-tRNA to the A-site of ribosomes during protein biosynthesis. The protein is Elongation factor Tu of Lawsonia intracellularis (strain PHE/MN1-00).